The primary structure comprises 223 residues: Deoxyribose-phosphate aldolase (223 aa).

The Proton donor/acceptor role is filled by Asp-91. Lys-154 acts as the Schiff-base intermediate with acetaldehyde in catalysis. Catalysis depends on Lys-183, which acts as the Proton donor/acceptor.

This sequence belongs to the DeoC/FbaB aldolase family. DeoC type 1 subfamily.

The protein resides in the cytoplasm. The enzyme catalyses 2-deoxy-D-ribose 5-phosphate = D-glyceraldehyde 3-phosphate + acetaldehyde. Its pathway is carbohydrate degradation; 2-deoxy-D-ribose 1-phosphate degradation; D-glyceraldehyde 3-phosphate and acetaldehyde from 2-deoxy-alpha-D-ribose 1-phosphate: step 2/2. In terms of biological role, catalyzes a reversible aldol reaction between acetaldehyde and D-glyceraldehyde 3-phosphate to generate 2-deoxy-D-ribose 5-phosphate. This is Deoxyribose-phosphate aldolase from Geobacillus kaustophilus (strain HTA426).